The sequence spans 203 residues: Ras-related protein Rab-13 (203 aa).

Residues Ser17, Gly18, Gly20, Lys21, Thr22, Cys23, and Thr40 each coordinate GTP. Thr22 serves as a coordination point for Mg(2+). The short motif at 31-45 (DSFNNTYISTIGIDF) is the Switch 1 element. Thr40 lines the Mg(2+) pocket. Glycyl lysine isopeptide (Lys-Gly) (interchain with G-Cter in ubiquitin) cross-links involve residues Lys46 and Lys58. Asp63 contacts Mg(2+). The Switch 2 signature appears at 63-80 (DTAGQERFKTITTAYYRG). Positions 66, 121, 122, 124, 152, and 153 each coordinate GTP. The segment at 173-203 (SGGRRSGNSHKAPGTDLKPCDKKNTSKCSLG) is disordered. The residue at position 178 (Ser178) is a Phosphoserine. Residue Cys200 is modified to Cysteine methyl ester. Residue Cys200 is the site of S-geranylgeranyl cysteine attachment. A propeptide spans 201-203 (SLG) (removed in mature form).

This sequence belongs to the small GTPase superfamily. Rab family. Interacts (GTP-bound form) with MICALL2; competes with RAB8A and is involved in tight junctions assembly. Interacts (GTP-bound form) with MICALL1. Interacts (GTP-bound form) with MICAL1, MICAL3, MICALCL, EHBP1 and EHBP1L1; ternary complexes of RAB8A, RAB13 and either MICAL1 or EHBP1L1 are possible. Interacts with PRKACA; downstream effector of RAB13 involved in tight junction assembly. Interacts with GRB2; may recruit RAB13 to the leading edge of migrating endothelial cells where it can activate RHOA. Interacts (isoprenylated form) with PDE6D; dissociates RAB13 from membranes. Interacts with BICDL2/BICDR2. Interacts with LEPROT and LEPROTL1. The cofactor is Mg(2+). Post-translationally, ubiquitinated via 'Lys-11'-linked ubiquitination on Lys-46 and Lys-58; impairing the recruitment of guanosine diphosphate (GDP) dissociation inhibitor 1/GDI1.

Its subcellular location is the cell membrane. It is found in the cytoplasmic vesicle membrane. It localises to the cell junction. The protein resides in the tight junction. The protein localises to the golgi apparatus. Its subcellular location is the trans-Golgi network membrane. It is found in the recycling endosome membrane. It localises to the cell projection. The protein resides in the lamellipodium. It catalyses the reaction GTP + H2O = GDP + phosphate + H(+). Its activity is regulated as follows. Regulated by guanine nucleotide exchange factors (GEFs) including DENND1C, which promote the exchange of bound GDP for free GTP. Regulated by GTPase activating proteins (GAPs) which increase the GTP hydrolysis activity. Inhibited by GDP dissociation inhibitors (GDIs). Activated in response to insulin. The small GTPases Rab are key regulators of intracellular membrane trafficking, from the formation of transport vesicles to their fusion with membranes. Rabs cycle between an inactive GDP-bound form and an active GTP-bound form that is able to recruit to membranes different sets of downstream effectors directly responsible for vesicle formation, movement, tethering and fusion. RAB13 is involved in endocytic recycling and regulates the transport to the plasma membrane of transmembrane proteins like the tight junction protein OCLN/occludin. Thereby, it regulates the assembly and the activity of tight junctions. Moreover, it may also regulate tight junction assembly by activating the PKA signaling pathway and by reorganizing the actin cytoskeleton through the activation of the downstream effectors PRKACA and MICALL2 respectively. Through its role in tight junction assembly, may play a role in the establishment of Sertoli cell barrier. Plays also a role in angiogenesis through regulation of endothelial cells chemotaxis. Also involved in neurite outgrowth. Has also been proposed to play a role in post-Golgi membrane trafficking from the TGN to the recycling endosome. Finally, it has been involved in insulin-induced transport to the plasma membrane of the glucose transporter GLUT4 and therefore may play a role in glucose homeostasis. This Canis lupus familiaris (Dog) protein is Ras-related protein Rab-13 (RAB13).